The following is a 638-amino-acid chain: Zinc finger protein 143 (638 aa).

Residue methionine 1 is modified to N-acetylmethionine. Residue lysine 213 forms a Glycyl lysine isopeptide (Lys-Gly) (interchain with G-Cter in SUMO2) linkage. 4 consecutive C2H2-type zinc fingers follow at residues phenylalanine 237 to histidine 261, tyrosine 267 to histidine 291, tyrosine 297 to histidine 321, and phenylalanine 327 to histidine 351. A Phosphothreonine modification is found at threonine 352. 3 consecutive C2H2-type zinc fingers follow at residues tyrosine 357–histidine 381, tyrosine 387–histidine 411, and tyrosine 417–histidine 440. Residue lysine 406 forms a Glycyl lysine isopeptide (Lys-Gly) (interchain with G-Cter in SUMO2) linkage.

Belongs to the GLI C2H2-type zinc-finger protein family. Interacts with CHD8. Forms a complex with HCFC1 and ZNF143.

It is found in the nucleus. Functionally, transcriptional activator. Activates the gene for selenocysteine tRNA (tRNAsec). Binds to the SPH motif of small nuclear RNA (snRNA) gene promoters. Participates in efficient U6 RNA polymerase III transcription via its interaction with CHD8. In complex with HCFC1 and ZNF143, regulates the expression of several genes, including AP2S1, ESCO2, OPHN1, RBL1, UBXN8 and ZNF32. In Mus musculus (Mouse), this protein is Zinc finger protein 143 (Znf143).